Here is a 359-residue protein sequence, read N- to C-terminus: Non-functional pseudokinase ZRK2 (359 aa).

Over residues 1 to 10 (MKSMVKKLKQ) the composition is skewed to basic residues. Positions 1–20 (MKSMVKKLKQSLRSGSLEKR) are disordered. A Protein kinase domain is found at 64-356 (LKATSNFGSS…KELKQIETLF (293 aa)). Residues 70–78 (FGSSCFVTA) and Lys-97 each bind ATP.

It belongs to the protein kinase superfamily. Ser/Thr protein kinase family. ZRK subfamily.

The protein is Non-functional pseudokinase ZRK2 of Arabidopsis thaliana (Mouse-ear cress).